The primary structure comprises 234 residues: Leucyl/phenylalanyl-tRNA--protein transferase (234 aa).

This sequence belongs to the L/F-transferase family.

The protein localises to the cytoplasm. The catalysed reaction is N-terminal L-lysyl-[protein] + L-leucyl-tRNA(Leu) = N-terminal L-leucyl-L-lysyl-[protein] + tRNA(Leu) + H(+). It carries out the reaction N-terminal L-arginyl-[protein] + L-leucyl-tRNA(Leu) = N-terminal L-leucyl-L-arginyl-[protein] + tRNA(Leu) + H(+). The enzyme catalyses L-phenylalanyl-tRNA(Phe) + an N-terminal L-alpha-aminoacyl-[protein] = an N-terminal L-phenylalanyl-L-alpha-aminoacyl-[protein] + tRNA(Phe). Functionally, functions in the N-end rule pathway of protein degradation where it conjugates Leu, Phe and, less efficiently, Met from aminoacyl-tRNAs to the N-termini of proteins containing an N-terminal arginine or lysine. This chain is Leucyl/phenylalanyl-tRNA--protein transferase, found in Pectobacterium atrosepticum (strain SCRI 1043 / ATCC BAA-672) (Erwinia carotovora subsp. atroseptica).